A 76-amino-acid polypeptide reads, in one-letter code: Putative defensin-like protein 184 (76 aa).

The signal sequence occupies residues 1–21 (MKNSSILFVLIIVVFLISSSG). 4 disulfides stabilise this stretch: cysteine 32/cysteine 76, cysteine 38/cysteine 58, cysteine 44/cysteine 70, and cysteine 48/cysteine 72.

This sequence belongs to the DEFL family.

It is found in the secreted. The chain is Putative defensin-like protein 184 (LCR18) from Arabidopsis thaliana (Mouse-ear cress).